The sequence spans 183 residues: Maltose O-acetyltransferase (183 aa).

Asn83 is a binding site for acetyl-CoA. Catalysis depends on His113, which acts as the Proton donor/acceptor. Residues Gly140, Ser158, 163-164 (TK), Arg178, and Lys181 contribute to the acetyl-CoA site.

Belongs to the transferase hexapeptide repeat family. Homodimer.

It catalyses the reaction D-maltose + acetyl-CoA = 1-O-acetylmaltose + CoA. In terms of biological role, catalyzes the CoA-dependent transfer of an acetyl group to maltose and other sugars. Acetylates glucose exclusively at the C6 position and maltose at the C6 position of the non-reducing end glucosyl moiety. Is able to acetylate maltooligosaccharides. The chain is Maltose O-acetyltransferase (maa) from Escherichia coli (strain K12).